The primary structure comprises 933 residues: Bromodomain testis-specific protein (933 aa).

Positions 1-21 (MSMSSRHLHSSIVNPPPPEYI) are disordered. In terms of domain architecture, Bromo 1 spans 28 to 134 (RLTNQLQYLE…KVFMEKIAEM (107 aa)). Residues 214-225 (KGIKRKADTTTP) carry the Nuclear localization signal motif. Residues 235–263 (ESSPTLSEPKPNKILSGTEKTRSAETSAV) are disordered. The 108-residue stretch at 278–385 (NQICEQLKHC…DVFEGMFAKI (108 aa)) folds into the Bromo 2 domain. Disordered stretches follow at residues 398–425 (RYKT…DERA), 576–610 (KPSS…QLSS), and 627–662 (GGPS…ESAT). Over residues 404 to 418 (EESSSSSSSEQSSSS) the composition is skewed to low complexity. Positions 423 to 448 (ERAQHLALLQEQLRAVQEQLKALTET) form a coiled coil. The region spanning 495–577 (VSDEEEDVKP…VCLRKRPKKP (83 aa)) is the NET domain. Residues 584–603 (KSKEQLNKEKKQELEKRLRD) are compositionally biased toward basic and acidic residues. The segment covering 630-660 (SRLSESSTSSSASDVSNSSDSSSSDSSDSES) has biased composition (low complexity). A coiled-coil region spans residues 829-917 (AKEERERALK…RREAMAGTID (89 aa)).

Belongs to the BET family.

The protein localises to the nucleus. In terms of biological role, testis-specific chromatin protein that specifically binds histone H4 acetylated at 'Lys-5' and 'Lys-8' (H4K5ac and H4K8ac, respectively) and plays a key role in spermatogenesis. Required in late pachytene spermatocytes: plays a role in meiotic and post-meiotic cells by binding to acetylated histones at the promoter of specific meiotic and post-meiotic genes, facilitating their activation at the appropriate time. In the post-meiotic phase of spermatogenesis, binds to hyperacetylated histones and participates in their general removal from DNA. Also recognizes and binds a subset of butyrylated histones: able to bind histone H4 butyrylated at 'Lys-8' (H4K8ac), while it is not able to bind H4 butyrylated at 'Lys-5' (H4K5ac). This Xenopus tropicalis (Western clawed frog) protein is Bromodomain testis-specific protein (brdt).